A 372-amino-acid chain; its full sequence is Cytochrome b (372 aa).

4 helical membrane-spanning segments follow: residues 25–45 (FGSM…FLAI), 69–90 (WIIQ…YTHI), 105–125 (WLSG…GYVL), and 170–190 (FFAL…IHII). 2 residues coordinate heme b: His-75 and His-89. His-174 and His-188 together coordinate heme b. His-193 is a binding site for a ubiquinone. 4 consecutive transmembrane segments (helical) span residues 218–238 (YKDT…MSFM), 280–300 (LGGT…PFTH), 312–332 (LTQI…WSAT), and 339–358 (FIFI…IINP).

The protein belongs to the cytochrome b family. In terms of assembly, the cytochrome bc1 complex contains 3 respiratory subunits (MT-CYB, CYC1 and UQCRFS1), 2 core proteins (UQCRC1 and UQCRC2) and probably 6 low-molecular weight proteins. It depends on heme b as a cofactor.

Its subcellular location is the mitochondrion inner membrane. In terms of biological role, component of the ubiquinol-cytochrome c reductase complex (complex III or cytochrome b-c1 complex) that is part of the mitochondrial respiratory chain. The b-c1 complex mediates electron transfer from ubiquinol to cytochrome c. Contributes to the generation of a proton gradient across the mitochondrial membrane that is then used for ATP synthesis. The chain is Cytochrome b (MT-CYB) from Hydrophis semperi (Lake Taal snake).